The sequence spans 323 residues: Oligodendrocyte transcription factor 2 (323 aa).

2 stretches are compositionally biased toward polar residues: residues M1–S13 and K27–S45. Residues M1–Q107 are disordered. The segment covering K76–S93 has biased composition (low complexity). One can recognise a bHLH domain in the interval Q108–L162.

In terms of assembly, interacts with NKX2-2. Interacts with ZNF488. In terms of tissue distribution, expressed in the brain, in oligodendrocytes. Strongly expressed in oligodendrogliomas, while expression is weak to moderate in astrocytomas. Expression in glioblastomas highly variable.

Its subcellular location is the nucleus. The protein localises to the cytoplasm. Required for oligodendrocyte and motor neuron specification in the spinal cord, as well as for the development of somatic motor neurons in the hindbrain. Functions together with ZNF488 to promote oligodendrocyte differentiation. Cooperates with OLIG1 to establish the pMN domain of the embryonic neural tube. Antagonist of V2 interneuron and of NKX2-2-induced V3 interneuron development. This chain is Oligodendrocyte transcription factor 2 (OLIG2), found in Homo sapiens (Human).